We begin with the raw amino-acid sequence, 122 residues long: Small ribosomal subunit protein uS13 (122 aa).

A disordered region spans residues 95–122 (GLPVRGQRTKTNARTRKGPKKTIAGKKK).

This sequence belongs to the universal ribosomal protein uS13 family. In terms of assembly, part of the 30S ribosomal subunit. Forms a loose heterodimer with protein S19. Forms two bridges to the 50S subunit in the 70S ribosome.

Functionally, located at the top of the head of the 30S subunit, it contacts several helices of the 16S rRNA. In the 70S ribosome it contacts the 23S rRNA (bridge B1a) and protein L5 of the 50S subunit (bridge B1b), connecting the 2 subunits; these bridges are implicated in subunit movement. Contacts the tRNAs in the A and P-sites. This is Small ribosomal subunit protein uS13 from Corynebacterium diphtheriae (strain ATCC 700971 / NCTC 13129 / Biotype gravis).